Consider the following 454-residue polypeptide: Immediate-early protein ICP-46 homolog (454 aa).

Residues 330–357 are a coiled coil; that stretch reads EKDIETIEKYEKTIQELIVELHNLYLKR. Residues 428–454 form a disordered region; the sequence is SSPTASLSSLSPPSSNNNSPIRSPIRM.

The protein belongs to the IIV-6 393L family.

The chain is Immediate-early protein ICP-46 homolog from Invertebrate iridescent virus 6 (IIV-6).